The following is a 211-amino-acid chain: Thiamine-phosphate synthase (211 aa).

Residues 43 to 47 (QLRDK) and asparagine 75 each bind 4-amino-2-methyl-5-(diphosphooxymethyl)pyrimidine. Mg(2+) is bound by residues aspartate 76 and aspartate 95. A 4-amino-2-methyl-5-(diphosphooxymethyl)pyrimidine-binding site is contributed by serine 114. 140 to 142 (TAS) contacts 2-[(2R,5Z)-2-carboxy-4-methylthiazol-5(2H)-ylidene]ethyl phosphate. Lysine 143 serves as a coordination point for 4-amino-2-methyl-5-(diphosphooxymethyl)pyrimidine. 2-[(2R,5Z)-2-carboxy-4-methylthiazol-5(2H)-ylidene]ethyl phosphate-binding positions include glycine 170 and 190–191 (IS).

This sequence belongs to the thiamine-phosphate synthase family. Mg(2+) serves as cofactor.

It catalyses the reaction 2-[(2R,5Z)-2-carboxy-4-methylthiazol-5(2H)-ylidene]ethyl phosphate + 4-amino-2-methyl-5-(diphosphooxymethyl)pyrimidine + 2 H(+) = thiamine phosphate + CO2 + diphosphate. The catalysed reaction is 2-(2-carboxy-4-methylthiazol-5-yl)ethyl phosphate + 4-amino-2-methyl-5-(diphosphooxymethyl)pyrimidine + 2 H(+) = thiamine phosphate + CO2 + diphosphate. It carries out the reaction 4-methyl-5-(2-phosphooxyethyl)-thiazole + 4-amino-2-methyl-5-(diphosphooxymethyl)pyrimidine + H(+) = thiamine phosphate + diphosphate. It functions in the pathway cofactor biosynthesis; thiamine diphosphate biosynthesis; thiamine phosphate from 4-amino-2-methyl-5-diphosphomethylpyrimidine and 4-methyl-5-(2-phosphoethyl)-thiazole: step 1/1. Condenses 4-methyl-5-(beta-hydroxyethyl)thiazole monophosphate (THZ-P) and 2-methyl-4-amino-5-hydroxymethyl pyrimidine pyrophosphate (HMP-PP) to form thiamine monophosphate (TMP). The polypeptide is Thiamine-phosphate synthase (Coprothermobacter proteolyticus (strain ATCC 35245 / DSM 5265 / OCM 4 / BT)).